The chain runs to 375 residues: Stimulator of interferon genes protein 2 (375 aa).

A run of 4 helical transmembrane segments spans residues 30–50, 60–80, 114–134, and 144–164; these read TATVTSAIVFVISGALLLLAV, IHFLVFTAALLTLSFVLGELV, AGSILVVAISSALTLCFVLYE, and YPILFFLNCLVVPQLSFLVGL. Tyr-195, Arg-256, and Arg-262 together coordinate 2',3'-cGAMP.

It belongs to the STING family.

The protein localises to the membrane. In terms of biological role, facilitator of innate immune signaling that acts as a sensor of second messenger signals produced by cyclic GMP-AMP synthase-like receptors (cGLRs) and promotes the production of type I interferon. Innate immune response is triggered in response to nucleotides from viruses and bacteria delivered to the cytoplasm. Acts by binding cyclic dinucleotides: recognizes and binds 2'-3' linked cGAMP (2'-3'-cGAMP), a second messengers produced by cGLRs in response to nucleotides in the cytosol, such as double-stranded RNA (dsRNA). Upon binding to 2'-3'-cGAMP, oligomerizes and promotes the recruitment and subsequent activation of the transcription factor IRF3 to induce expression of type I interferon. This chain is Stimulator of interferon genes protein 2, found in Stylophora pistillata (Smooth cauliflower coral).